The following is a 440-amino-acid chain: D-serine dehydratase (440 aa).

Lys-116 bears the N6-(pyridoxal phosphate)lysine mark.

Belongs to the serine/threonine dehydratase family. DsdA subfamily. In terms of assembly, monomer. Pyridoxal 5'-phosphate serves as cofactor.

It catalyses the reaction D-serine = pyruvate + NH4(+). This chain is D-serine dehydratase, found in Salmonella schwarzengrund (strain CVM19633).